The sequence spans 315 residues: Homoserine kinase (315 aa).

Pro97 to Thr107 contacts ATP.

This sequence belongs to the GHMP kinase family. Homoserine kinase subfamily.

The protein resides in the cytoplasm. The enzyme catalyses L-homoserine + ATP = O-phospho-L-homoserine + ADP + H(+). The protein operates within amino-acid biosynthesis; L-threonine biosynthesis; L-threonine from L-aspartate: step 4/5. Functionally, catalyzes the ATP-dependent phosphorylation of L-homoserine to L-homoserine phosphate. The protein is Homoserine kinase of Synechococcus sp. (strain CC9902).